A 436-amino-acid polypeptide reads, in one-letter code: Prenyltransferase nscD (436 aa).

The protein belongs to the tryptophan dimethylallyltransferase family.

It participates in secondary metabolite biosynthesis. Prenyltransferase; part of the gene cluster that mediates the biosynthesis of neosartoricin B, a prenylated anthracenone that probably exhibits T-cell antiproliferative activity, suggestive of a physiological role as an immunosuppressive agent. The non-reducing polyketide synthase nscA probably synthesizes and cyclizes the decaketide backbone. The hydrolase nscB then mediates the product release through hydrolysis followed by spontaneous decarboxylation. The prenyltransferase nscD catalyzes the addition of the dimethylallyl group to the aromatic C5. The FAD-dependent monooxygenase nscC is then responsible for the stereospecific hydroxylation at C2. Neosartoricin B can be converted into two additional compounds neosartoricins C and D. Neosartoricin C is a spirocyclic compound that is cyclized through the attack of C3 hydroxyl on C14, followed by dehydration. On the other hand, neosartoricin D is a further cyclized compound in which attack of C2 on C14 in neosartoricin C results in the formation of the acetal-containing dioxabicyclo-octanone ring. Both of these compounds are novel and possibly represent related metabolites of the gene cluster. In Arthroderma gypseum (strain ATCC MYA-4604 / CBS 118893) (Microsporum gypseum), this protein is Prenyltransferase nscD.